The sequence spans 60 residues: Large ribosomal subunit protein bL32 (60 aa).

Residues 1–16 show a composition bias toward basic residues; it reads MAVPKKKTSKSRKNMR. The interval 1–20 is disordered; that stretch reads MAVPKKKTSKSRKNMRRAHD.

This sequence belongs to the bacterial ribosomal protein bL32 family.

This is Large ribosomal subunit protein bL32 from Geobacter metallireducens (strain ATCC 53774 / DSM 7210 / GS-15).